The sequence spans 165 residues: GTPase activating protein 1 (165 aa).

A C2 domain is found at 1–105; the sequence is MLGHLVGLVK…VVKMKIEGVA (105 aa). The Ca(2+) site is built by Arg-22, Asp-23, Asp-28, Asp-74, Lys-75, Asp-76, and Asp-81.

This sequence belongs to the plant CAR protein family. Binds to PYR/PYL/RCAR abscisic acid intracellular receptors in an ABA-independent manner, both at the plasma membrane and in the nucleus. Binds phospholipids in a Ca(2+)-dependent manner. Interacts with YchF1.

The protein resides in the cell membrane. Its subcellular location is the nucleus. It is found in the cytoplasm. The protein localises to the cytosol. In terms of biological role, mediates the transient calcium-dependent interaction of PYR/PYL/RCAR abscisic acid (ABA) receptors with the plasma membrane and thus regulates ABA sensitivity. Stimulates the GTPase/ATPase activities of YchF1, and regulates its subcellular localization. Promotes tolerance towards salinity stress by limiting the accumulation of reactive oxygen species (ROS). Promotes resistance to bacterial pathogens. The protein is GTPase activating protein 1 of Oryza sativa subsp. indica (Rice).